Here is a 151-residue protein sequence, read N- to C-terminus: Neuroglobin (151 aa).

The Globin domain maps to Met1–Asp149. Heme b is bound by residues His64 and His96.

Belongs to the globin family. In terms of assembly, monomer. Homodimer and homotetramer; disulfide-linked. Mainly monomeric but also detected as part of homodimers and homotetramers. Interacts with 14-3-3 proteins; regulates the phosphorylation of NGB. Could interact (ferrous form) with G-alpha(i) proteins (GTP-bound form). In terms of processing, phosphorylated during hypoxia by ERK1/ERK2. Phosphorylation regulates the heme pocket hexacoordination preventing the association of His-64 with the heme metal center. Thereby, promotes the access of dioxygen and nitrite to the heme and stimulates the nitrite reductase activity. Phosphorylation during hypoxia is stabilized by 14-3-3 proteins. In terms of tissue distribution, widely distributed throughout the adult brain, including cerebral cortex, hippocampus, thalamus, hypothalamus, olfactory bulb, and cerebellum.

The protein localises to the cytoplasm. It is found in the cytosol. It localises to the mitochondrion matrix. The catalysed reaction is Fe(III)-heme b-[protein] + nitric oxide + H2O = Fe(II)-heme b-[protein] + nitrite + 2 H(+). Monomeric globin with a bis-histidyl six-coordinate heme-iron atom through which it can bind dioxygen, carbon monoxide and nitric oxide. Could help transport oxygen and increase its availability to the metabolically active neuronal tissues, though its low quantity in tissues as well as its high affinity for dioxygen, which may limit its oxygen-releasing ability, argue against it. The ferrous/deoxygenated form exhibits a nitrite reductase activity and it could produce nitric oxide which in turn inhibits cellular respiration in response to hypoxia. In its ferrous/deoxygenated state, it may also exhibit GDI (Guanine nucleotide Dissociation Inhibitor) activity toward heterotrimeric G-alpha proteins, thereby regulating signal transduction to facilitate neuroprotective responses in the wake of hypoxia and associated oxidative stress. This chain is Neuroglobin, found in Rattus norvegicus (Rat).